The following is a 304-amino-acid chain: Nicotinamide/nicotinic acid mononucleotide adenylyltransferase 2 (304 aa).

NAD(+) is bound by residues Ser-16 and Phe-17. His-24 serves as a coordination point for ATP. 2 residues coordinate NAD(+): Trp-92 and Thr-95. S-palmitoyl cysteine attachment occurs at residues Cys-161 and Cys-162. 5 residues coordinate NAD(+): Gly-197, Asp-199, Leu-209, Trp-210, and Arg-229. Residue 268-271 (TKSR) participates in ATP binding.

This sequence belongs to the eukaryotic NMN adenylyltransferase family. As to quaternary structure, monomer. Mg(2+) is required as a cofactor.

The protein localises to the golgi apparatus membrane. It localises to the cytoplasmic vesicle membrane. Its subcellular location is the cytoplasm. It is found in the cell projection. The protein resides in the axon. It catalyses the reaction beta-nicotinamide D-ribonucleotide + ATP + H(+) = diphosphate + NAD(+). It carries out the reaction nicotinate beta-D-ribonucleotide + ATP + H(+) = deamido-NAD(+) + diphosphate. It participates in cofactor biosynthesis; NAD(+) biosynthesis; NAD(+) from nicotinamide D-ribonucleotide: step 1/1. It functions in the pathway cofactor biosynthesis; NAD(+) biosynthesis; deamido-NAD(+) from nicotinate D-ribonucleotide: step 1/1. Nicotinamide/nicotinate-nucleotide adenylyltransferase that acts as an axon maintenance factor. Axon survival factor required for the maintenance of healthy axons: acts by delaying Wallerian axon degeneration, an evolutionarily conserved process that drives the loss of damaged axons. Catalyzes the formation of NAD(+) from nicotinamide mononucleotide (NMN) and ATP. Can also use the deamidated form; nicotinic acid mononucleotide (NaMN) as substrate but with a lower efficiency. Also catalyzes the reverse reaction, i.e. the pyrophosphorolytic cleavage of NAD(+). For the pyrophosphorolytic activity prefers NAD(+), NADH and NaAD as substrates and degrades nicotinic acid adenine dinucleotide phosphate (NHD) less effectively. Also acts as an activator of ADP-ribosylation by supporting the catalytic activity of PARP16 and promoting mono-ADP-ribosylation of ribosomes by PARP16. May be involved in the maintenance of axonal integrity. This is Nicotinamide/nicotinic acid mononucleotide adenylyltransferase 2 (nmnat2) from Danio rerio (Zebrafish).